Consider the following 494-residue polypeptide: V-type proton ATPase subunit B (494 aa).

Arg-384 provides a ligand contact to ATP.

This sequence belongs to the ATPase alpha/beta chains family. In terms of assembly, V-ATPase is a heteromultimeric enzyme made up of two complexes: the ATP-hydrolytic V1 complex and the proton translocation V0 complex. The V1 complex consists of three catalytic AB heterodimers that form a heterohexamer, three peripheral stalks each consisting of EG heterodimers, one central rotor including subunits D and F, and the regulatory subunits C and H. The proton translocation complex V0 consists of the proton transport subunit a, a ring of proteolipid subunits c9c'', rotary subunit d, subunits e and f, and the accessory subunits VhaAC45 and ATP6AP2.

Non-catalytic subunit of the V1 complex of vacuolar(H+)-ATPase (V-ATPase), a multisubunit enzyme composed of a peripheral complex (V1) that hydrolyzes ATP and a membrane integral complex (V0) that translocates protons. V-ATPase is responsible for acidifying and maintaining the pH of intracellular compartments and in some cell types, is targeted to the plasma membrane, where it is responsible for acidifying the extracellular environment. Essential for the proper assembly and activity of V-ATPase. This chain is V-type proton ATPase subunit B (VHA55), found in Manduca sexta (Tobacco hawkmoth).